Reading from the N-terminus, the 126-residue chain is Large ribosomal subunit protein uL22 (126 aa).

It belongs to the universal ribosomal protein uL22 family. As to quaternary structure, part of the 50S ribosomal subunit.

Functionally, this protein binds specifically to 23S rRNA; its binding is stimulated by other ribosomal proteins, e.g. L4, L17, and L20. It is important during the early stages of 50S assembly. It makes multiple contacts with different domains of the 23S rRNA in the assembled 50S subunit and ribosome. Its function is as follows. The globular domain of the protein is located near the polypeptide exit tunnel on the outside of the subunit, while an extended beta-hairpin is found that lines the wall of the exit tunnel in the center of the 70S ribosome. The protein is Large ribosomal subunit protein uL22 of Ruegeria sp. (strain TM1040) (Silicibacter sp.).